A 92-amino-acid chain; its full sequence is YcgL domain-containing protein VC0395_A1544/VC395_2072 (92 aa).

A YcgL domain is found at Met1 to Lys84. The disordered stretch occupies residues Gln71 to Pro92.

This Vibrio cholerae serotype O1 (strain ATCC 39541 / Classical Ogawa 395 / O395) protein is YcgL domain-containing protein VC0395_A1544/VC395_2072.